A 682-amino-acid polypeptide reads, in one-letter code: Acyl-CoA synthetase short-chain family member 3, mitochondrial (682 aa).

The N-terminal 29 residues, 1 to 29 (MKPSWLQCRKVTGAGTLGAPLPGSPSVRG), are a transit peptide targeting the mitochondrion. 222-225 (EPGR) lines the CoA pocket. ATP-binding positions include 420–422 (GER) and 441–446 (DHWWQT). Position 513 is an N6-succinyllysine (Lys-513). Residue Lys-519 is modified to N6-acetyllysine. Positions 534, 549, and 560 each coordinate ATP. Arg-619 lines the CoA pocket.

Belongs to the ATP-dependent AMP-binding enzyme family.

It is found in the mitochondrion matrix. It carries out the reaction acetate + ATP + CoA = acetyl-CoA + AMP + diphosphate. It catalyses the reaction propanoate + ATP + CoA = propanoyl-CoA + AMP + diphosphate. The catalysed reaction is butanoate + ATP + CoA = butanoyl-CoA + AMP + diphosphate. Catalyzes the synthesis of acetyl-CoA from short-chain fatty acids. Propionate is the preferred substrate but can also utilize acetate and butyrate with a much lower affinity. This chain is Acyl-CoA synthetase short-chain family member 3, mitochondrial (Acss3), found in Mus musculus (Mouse).